We begin with the raw amino-acid sequence, 141 residues long: MKMGMAKHSPRNKEYLCLTICGYRKEGMSEEAYRNHMVNVSAPMTKDLMVKYGIRRWTQIHNQNATRALMAELFDPQMCRLADFDCFSQVVFDNIEDYKRMKQDPWYKKHLMHDHEMFADTKRSMMTIGWIKEFVVDGKAV.

In terms of domain architecture, EthD spans 26-121; it reads EGMSEEAYRN…MHDHEMFADT (96 aa).

This sequence belongs to the tpcK family.

The catalysed reaction is atrochrysone carboxylate + H(+) = atrochrysone + CO2. Decarboxylase; part of the ergochrome gene cluster responsible for the typical purple-black color of the ergot sclerotia. The ergochrome gene cluster produces several ergot pigments including the yellow ergochrome secalonic acid and its derivatives, as well as the red anthraquinones endocrocin and clavorubin. The pathway begins with the synthesis of atrochrysone thioester by the polyketide synthase (PKS) CPUR_05437. The atrochrysone carboxyl ACP thioesterase CPUR_05436 then breaks the thioester bond and releases the atrochrysone carboxylic acid from CPUR_05437. The decarboxylase CPUR_05434 then catalyzes the concerted decarboxylation-elimination required to convert atochrysone carboxylic acid into emodin anthrone, which is further oxidized to emodin by the anthrone oxygenase CPUR_05435. Emodin is further modified to yield monodictyphenone via several steps involving CPUR_05427, CPUR_05428, CPUR_05429 and CPUR_05430. The short chain dehydrogenase/reductase CPUR_05418 then catalyzes the C-5 ketoreduction to give the xanthone skeleton of the monomeric units. Ergochromes formation requires further dimerization steps of different xanthone units, probably catalyzed by the cytochrome P450 monooxygenase CPUR_05419. CPUR_05425, CPUR_05426 and CPUR_05431 are unique to Claviceps, thus it is likely that they are involved in further modification of xanthone units or in their dimerization. The yellow ergochromes and the red anthraquinone pigments endocrocin and clavorubin are products from the same PKS derived precursors and the latter are likely shunt products in the pathway of xanthone biosynthesis. It is proposed that atrochrysone carboxylic acid released from the PKS CPUR_05437 can also be converted to endocrocin anthrone which is further oxidized into endocrocin by CPUR_05435. Endocrocin could be then modified to clavorubin, possibly by CPUR_05423 and CPUR_05431. Clavorubin is the principal anthraquinone metabolite produced by the cluster with a much higher yield compared to endocrocin. The polypeptide is Decarboxylase CPUR_05434 (Claviceps purpurea (strain 20.1) (Ergot fungus)).